The following is a 525-amino-acid chain: Coronin-2A (525 aa).

WD repeat units lie at residues 24–71 (NCYD…TGKL), 72–122 (DPHY…RNLT), 123–170 (AYRK…SVIT), 171–214 (SPMS…AGTV), 215–259 (LQEA…DNLS), 260–305 (VPLM…ADKP), and 306–342 (HLSY…RFYK). A coiled-coil region spans residues 485–524 (QMFYRQQEEIRRLRELLTQREVQAKQLELEIKNLRMGSEQ).

It belongs to the WD repeat coronin family. As to quaternary structure, binds actin. Component of the N-Cor repressor complex, at least composed of NCOR1, NCOR2, HDAC3, TBL1X, TBL1R, CORO2A and GPS2.

This chain is Coronin-2A (CORO2A), found in Homo sapiens (Human).